A 582-amino-acid chain; its full sequence is Isopropyl malate synthase AMT7 (582 aa).

The Pyruvate carboxyltransferase domain maps to 61–341 (PVLFSTDLRD…EPGIDLSRLD (281 aa)).

It belongs to the alpha-IPM synthase/homocitrate synthase family. LeuA type 2 subfamily.

It catalyses the reaction 3-methyl-2-oxobutanoate + acetyl-CoA + H2O = (2S)-2-isopropylmalate + CoA + H(+). It functions in the pathway mycotoxin biosynthesis. In terms of biological role, isopropyl malate synthase; part of the gene clusters that mediate the biosynthesis of AM-toxins, host-selective toxins (HSTs) causing Alternaria blotch on apple, a worldwide distributed disease. AM-toxins are cyclic depsipeptides containing the 3 residues 2-hydroxy-isovaleric acid (2-HIV), dehydroalanine, L-alanine which are common for all 3 AM-toxins I to III. The fourth precursor is L-alpha-amino-methoxyphenyl-valeric acid (L-Amv) for AM-toxin I, L-alpha-amino-phenyl-valeric acid (L-Apv) for AM-toxin II, and L-alpha-amino-hydroxyphenyl-valeric acid (L-Ahv) for AM-toxin III. AM-toxins have two target sites for affecting susceptible apple cells; they cause invagination of the plasma membrane and electrolyte loss and chloroplast disorganization. The non-ribosomal peptide synthetase AMT1 contains 4 catalytic modules and is responsible for activation of each residue in AM-toxin. The aldo-keto reductase AMT2 catalyzes the conversion of 2-keto-isovaleric acid (2-KIV) to 2-hydroxy-isovaleric acid (2-HIV), one of the precursor residues incorporated by AMT1 during AM-toxin biosynthesis, by reduction of its ketone to an alcohol. The cytochrome P450 monooxygenase AMT3 and the thioesterase AMT4 are also important for AM-toxin production, but their exact function within the AM-toxin biosynthesis are not known yet. Up to 21 proteins (including AMT1 to AMT4) are predicted to be involved in AM-toxin biosynthesis since their expression ishighly up-regulated in AM-toxin-producing cultures. In Alternaria alternata (Alternaria rot fungus), this protein is Isopropyl malate synthase AMT7.